Here is a 270-residue protein sequence, read N- to C-terminus: Interleukin-33 (270 aa).

Positions 1-65 (MKPKMKYSTN…EACYFRRETT (65 aa)) are homeodomain-like HTH domain. A propeptide spanning residues 1 to 94 (MKPKMKYSTN…CQQQSTVESF (94 aa)) is cleaved from the precursor. The segment at 64-111 (TTKRPSLKTDRKHKRHLVLAACQQQSTVESFAFGISGVQKYTRALHDS) is interaction with RELA.

The protein belongs to the IL-1 family. Highly divergent. As to quaternary structure, forms a 1:1:1 heterotrimeric complex with its primary high-affinity receptor IL1RL1 and the coreceptor IL1RAP. Interacts with cargo receptor TMED10; the interaction mediates the translocation from the cytoplasm into the ERGIC (endoplasmic reticulum-Golgi intermediate compartment) and thereby secretion. In terms of processing, the full-length protein can be released from cells and is able to signal via the IL1RL1/ST2 receptor. However, proteolytic processing by CELA1, CSTG/cathepsin G and ELANE/neutrophil elastase produces C-terminal peptides that are more active than the unprocessed full-length protein. May also be proteolytically processed by calpains. Proteolytic cleavage mediated by apoptotic caspases including CASP3 and CASP7 results in IL33 inactivation. In vitro proteolytic cleavage by CASP1 was reported but could not be confirmed in vivo suggesting that IL33 is probably not a direct substrate for that caspase.

It localises to the nucleus. It is found in the chromosome. The protein localises to the cytoplasm. The protein resides in the cytoplasmic vesicle. Its subcellular location is the secretory vesicle. It localises to the secreted. Its function is as follows. Cytokine that binds to and signals through the IL1RL1/ST2 receptor which in turn activates NF-kappa-B and MAPK signaling pathways in target cells. Involved in the maturation of Th2 cells inducing the secretion of T-helper type 2-associated cytokines. Also involved in activation of mast cells, basophils, eosinophils and natural killer cells. Acts as a chemoattractant for Th2 cells, and may function as an 'alarmin', that amplifies immune responses during tissue injury. Induces rapid UCP2-dependent mitochondrial rewiring that attenuates the generation of reactive oxygen species and preserves the integrity of Krebs cycle required for persistent production of itaconate and subsequent GATA3-dependent differentiation of inflammation-resolving alternatively activated macrophages. In terms of biological role, in quiescent endothelia the uncleaved form is constitutively and abundantly expressed, and acts as a chromatin-associated nuclear factor with transcriptional repressor properties, it may sequester nuclear NF-kappaB/RELA, lowering expression of its targets. This form is rapidely lost upon angiogenic or pro-inflammatory activation. This chain is Interleukin-33 (IL33), found in Pongo abelii (Sumatran orangutan).